The following is a 103-amino-acid chain: ATP-dependent Clp protease adapter protein ClpS 2 (103 aa).

It belongs to the ClpS family. As to quaternary structure, binds to the N-terminal domain of the chaperone ClpA.

Its function is as follows. Involved in the modulation of the specificity of the ClpAP-mediated ATP-dependent protein degradation. The polypeptide is ATP-dependent Clp protease adapter protein ClpS 2 (Agrobacterium fabrum (strain C58 / ATCC 33970) (Agrobacterium tumefaciens (strain C58))).